A 775-amino-acid chain; its full sequence is MILDADYITEDGKPIIRIFKKENGEFKVEYDRNFRPYIYALLKDDSQIDEVKKITAERHGKIVRIVDVEKVKKKFLGRPIEVWKLYFEHPQDVPAIRDKIREHPAVVDIFEYDIPFAKRYLIDKGLIPMEGDEELKLLAFDIETLYHEGEEFAKGPIIMISYADEEGAKVITWKKVDLPYVEVVSSEREMIKRFLKVIREKDPDVIITYNGDSFDLPYLVKRAEKLGIKLPLGRDGSEPKMQRLGDMTAVEIKGRIHFDLYHVIRRTINLPTYTLEAVYEAIFGKPKEKVYAHEIAEAWETGKGLERVAKYSMEDAKVTYELGREFFPMEAQLSRLVGQPLWDVSRSSTGNLVEWYLLRKAYERNELAPNKPDEREYERRLRESYAGGYVKEPEKGLWEGLVSLDFRSLYPSIIITHNVSPDTLNREGCREYDVAPEVKHKFCKDFPGFIPSLLKRLLDERQEIKRKMKASKDPIEKKMLDYRQRAIKILANSYYGYYGYAKARWYCKECAESVTAWGREYIEFVRKELEEKFGFKVLYIDTDGLYATIPGAKPEEIKRKALEFVEYINAKLPGLLELEYEGFYVRGFFVTKKKYALIDEEGKIITRGLEIVRRDWSEIAKETQAKVLEAILKHGNVEEAVKIVKEVTEKLSKYEIPPEKLVIYEQITRPLHEYKAIGPHVAVAKRLAARGVKVRPGMVIGYIVLRGDGPISKRAILAEEFDPRKHKYDAEYYIENQVLPAVLRILEAFGYRKGDLRWQKTKQTGLTAWLNVKKK.

The protein belongs to the DNA polymerase type-B family. In terms of assembly, monomer.

The enzyme catalyses DNA(n) + a 2'-deoxyribonucleoside 5'-triphosphate = DNA(n+1) + diphosphate. Functionally, in addition to polymerase activity, this DNA polymerase exhibits 3' to 5' exonuclease activity. The protein is DNA polymerase (pol) of Pyrococcus glycovorans.